The sequence spans 465 residues: UDP-N-acetylglucosamine 1-carboxyvinyltransferase (465 aa).

22-23 (KN) contributes to the phosphoenolpyruvate binding site. Arginine 94 contributes to the UDP-N-acetyl-alpha-D-glucosamine binding site. The active-site Proton donor is cysteine 119. 2-(S-cysteinyl)pyruvic acid O-phosphothioketal is present on cysteine 119. Residues aspartate 313 and valine 335 each contribute to the UDP-N-acetyl-alpha-D-glucosamine site.

Belongs to the EPSP synthase family. MurA subfamily.

It localises to the cytoplasm. It catalyses the reaction phosphoenolpyruvate + UDP-N-acetyl-alpha-D-glucosamine = UDP-N-acetyl-3-O-(1-carboxyvinyl)-alpha-D-glucosamine + phosphate. It functions in the pathway cell wall biogenesis; peptidoglycan biosynthesis. Its function is as follows. Cell wall formation. Adds enolpyruvyl to UDP-N-acetylglucosamine. This Protochlamydia amoebophila (strain UWE25) protein is UDP-N-acetylglucosamine 1-carboxyvinyltransferase.